The chain runs to 1167 residues: ATP-dependent helicase/deoxyribonuclease subunit B (1167 aa).

Residues 1-359 (MSLRFLLGRS…IRQTEAYRDL (359 aa)) form the UvrD-like helicase ATP-binding domain. 8–15 (GRSGSGKT) provides a ligand contact to ATP. Residues 282–588 (ANRRHEDRAL…EFSLVPPAMD (307 aa)) form the UvrD-like helicase C-terminal domain. Residues C804, C1126, C1129, and C1135 each coordinate [4Fe-4S] cluster.

This sequence belongs to the helicase family. AddB/RexB type 1 subfamily. In terms of assembly, heterodimer of AddA and AddB. The cofactor is Mg(2+). [4Fe-4S] cluster serves as cofactor.

Its function is as follows. The heterodimer acts as both an ATP-dependent DNA helicase and an ATP-dependent, dual-direction single-stranded exonuclease. Recognizes the chi site generating a DNA molecule suitable for the initiation of homologous recombination. The AddB subunit has 5' -&gt; 3' nuclease activity but not helicase activity. This chain is ATP-dependent helicase/deoxyribonuclease subunit B, found in Geobacillus kaustophilus (strain HTA426).